A 454-amino-acid polypeptide reads, in one-letter code: Glutamyl-tRNA reductase (454 aa).

Substrate contacts are provided by residues 50–53, Ser-103, 108–110, and Gln-114; these read TCNR and EDQ. The Nucleophile role is filled by Cys-51. 182–187 serves as a coordination point for NADP(+); it reads GAGEMG. Residues 407–454 are disordered; sequence LFDPNFGGDTPQPDRPDDIPRAAERGDISGDDLPDDVPNHIAEKVSDG. Basic and acidic residues-rich tracts occupy residues 418 to 434 and 443 to 454; these read QPDRPDDIPRAAERGDI and VPNHIAEKVSDG.

It belongs to the glutamyl-tRNA reductase family. In terms of assembly, homodimer.

It carries out the reaction (S)-4-amino-5-oxopentanoate + tRNA(Glu) + NADP(+) = L-glutamyl-tRNA(Glu) + NADPH + H(+). It participates in porphyrin-containing compound metabolism; protoporphyrin-IX biosynthesis; 5-aminolevulinate from L-glutamyl-tRNA(Glu): step 1/2. Functionally, catalyzes the NADPH-dependent reduction of glutamyl-tRNA(Glu) to glutamate 1-semialdehyde (GSA). The protein is Glutamyl-tRNA reductase of Haloquadratum walsbyi (strain DSM 16790 / HBSQ001).